The chain runs to 339 residues: Senescence-specific cysteine protease SAG39 (339 aa).

The N-terminal stretch at 1 to 23 (MAMAKALLFAILGCLCLCSAVLA) is a signal peptide. 3 disulfides stabilise this stretch: cysteine 144-cysteine 187, cysteine 178-cysteine 220, and cysteine 276-cysteine 328. Cysteine 147 is a catalytic residue. Catalysis depends on residues histidine 282 and asparagine 303.

Belongs to the peptidase C1 family. Low expression in mature leaves.

It is found in the vacuole. Cysteine protease that may have a developmental senescence specific cell death function during apoptosis, heavy metal detoxification, and hypersensitive response. In Oryza sativa subsp. japonica (Rice), this protein is Senescence-specific cysteine protease SAG39.